The primary structure comprises 990 residues: A-type ATP synthase subunit B (990 aa).

The DOD-type homing endonuclease domain maps to Val491–Val614.

The protein belongs to the ATPase alpha/beta chains family. In terms of assembly, has multiple subunits with at least A(3), B(3), C, D, E, F, H, I and proteolipid K(x). This protein undergoes a protein self splicing that involves a post-translational excision of the VDE intervening region (intein) followed by peptide ligation.

The protein resides in the cell membrane. In terms of biological role, component of the A-type ATP synthase that produces ATP from ADP in the presence of a proton gradient across the membrane. The B chain is a regulatory subunit. The sequence is that of A-type ATP synthase subunit B from Methanopyrus kandleri (strain AV19 / DSM 6324 / JCM 9639 / NBRC 100938).